We begin with the raw amino-acid sequence, 321 residues long: tRNA(Ile)-lysidine synthase (321 aa).

Serine 30–serine 35 is a binding site for ATP.

It belongs to the tRNA(Ile)-lysidine synthase family.

The protein localises to the cytoplasm. The enzyme catalyses cytidine(34) in tRNA(Ile2) + L-lysine + ATP = lysidine(34) in tRNA(Ile2) + AMP + diphosphate + H(+). In terms of biological role, ligates lysine onto the cytidine present at position 34 of the AUA codon-specific tRNA(Ile) that contains the anticodon CAU, in an ATP-dependent manner. Cytidine is converted to lysidine, thus changing the amino acid specificity of the tRNA from methionine to isoleucine. The chain is tRNA(Ile)-lysidine synthase from Chlamydia muridarum (strain MoPn / Nigg).